The sequence spans 323 residues: Breast cancer metastasis-suppressor 1-like protein-A (323 aa).

Residues 1 to 15 (MPVHSREKKESNHEE) are compositionally biased toward basic and acidic residues. The segment at 1–52 (MPVHSREKKESNHEEMEVDFAEQEGSSSEDEDTESSSVSEDGESSEMDDEDC) is disordered. Over residues 16-51 (MEVDFAEQEGSSSEDEDTESSSVSEDGESSEMDDED) the composition is skewed to acidic residues. 2 coiled-coil regions span residues 50–81 (EDCE…YKER) and 156–178 (QTEL…ITSE).

It belongs to the BRMS1 family.

The protein resides in the nucleus. Its function is as follows. Involved in the histone deacetylase (HDAC1)-dependent transcriptional repression activity. The protein is Breast cancer metastasis-suppressor 1-like protein-A (brms1la) of Danio rerio (Zebrafish).